Reading from the N-terminus, the 484-residue chain is Glutamyl-tRNA(Gln) amidotransferase subunit A (484 aa).

Active-site charge relay system residues include K76 and S151. S175 serves as the catalytic Acyl-ester intermediate.

It belongs to the amidase family. GatA subfamily. Heterotrimer of A, B and C subunits.

The enzyme catalyses L-glutamyl-tRNA(Gln) + L-glutamine + ATP + H2O = L-glutaminyl-tRNA(Gln) + L-glutamate + ADP + phosphate + H(+). Functionally, allows the formation of correctly charged Gln-tRNA(Gln) through the transamidation of misacylated Glu-tRNA(Gln) in organisms which lack glutaminyl-tRNA synthetase. The reaction takes place in the presence of glutamine and ATP through an activated gamma-phospho-Glu-tRNA(Gln). In Halorhodospira halophila (strain DSM 244 / SL1) (Ectothiorhodospira halophila (strain DSM 244 / SL1)), this protein is Glutamyl-tRNA(Gln) amidotransferase subunit A.